Consider the following 180-residue polypeptide: Bifunctional protein PyrR (180 aa).

Positions 101–113 (VILVDDVLYTGRT) match the PRPP-binding motif.

This sequence belongs to the purine/pyrimidine phosphoribosyltransferase family. PyrR subfamily. In terms of assembly, homodimer and homohexamer; in equilibrium.

The catalysed reaction is UMP + diphosphate = 5-phospho-alpha-D-ribose 1-diphosphate + uracil. Its function is as follows. Regulates transcriptional attenuation of the pyrimidine nucleotide (pyr) operon by binding in a uridine-dependent manner to specific sites on pyr mRNA. This disrupts an antiterminator hairpin in the RNA and favors formation of a downstream transcription terminator, leading to a reduced expression of downstream genes. Functionally, also displays a weak uracil phosphoribosyltransferase activity which is not physiologically significant. The chain is Bifunctional protein PyrR from Bacillus cereus (strain ATCC 14579 / DSM 31 / CCUG 7414 / JCM 2152 / NBRC 15305 / NCIMB 9373 / NCTC 2599 / NRRL B-3711).